Reading from the N-terminus, the 241-residue chain is tRNA pseudouridine synthase A (241 aa).

The active-site Nucleophile is Asp-52. Tyr-111 provides a ligand contact to substrate.

The protein belongs to the tRNA pseudouridine synthase TruA family. As to quaternary structure, homodimer.

It catalyses the reaction uridine(38/39/40) in tRNA = pseudouridine(38/39/40) in tRNA. Its function is as follows. Formation of pseudouridine at positions 38, 39 and 40 in the anticodon stem and loop of transfer RNAs. In Ureaplasma parvum serovar 3 (strain ATCC 27815 / 27 / NCTC 11736), this protein is tRNA pseudouridine synthase A.